We begin with the raw amino-acid sequence, 234 residues long: Glucosamine-6-phosphate deaminase (234 aa).

Asp62 (proton acceptor; for enolization step) is an active-site residue. Asn128 acts as the For ring-opening step in catalysis. The active-site Proton acceptor; for ring-opening step is the His130. The active-site For ring-opening step is the Glu135.

The protein belongs to the glucosamine/galactosamine-6-phosphate isomerase family. NagB subfamily.

The enzyme catalyses alpha-D-glucosamine 6-phosphate + H2O = beta-D-fructose 6-phosphate + NH4(+). It functions in the pathway amino-sugar metabolism; N-acetylneuraminate degradation; D-fructose 6-phosphate from N-acetylneuraminate: step 5/5. Functionally, catalyzes the reversible isomerization-deamination of glucosamine 6-phosphate (GlcN6P) to form fructose 6-phosphate (Fru6P) and ammonium ion. The chain is Glucosamine-6-phosphate deaminase from Ligilactobacillus salivarius (strain UCC118) (Lactobacillus salivarius).